A 63-amino-acid polypeptide reads, in one-letter code: Small ribosomal subunit protein eS17 (63 aa).

Belongs to the eukaryotic ribosomal protein eS17 family.

The chain is Small ribosomal subunit protein eS17 from Methanococcus maripaludis (strain C6 / ATCC BAA-1332).